Reading from the N-terminus, the 89-residue chain is ATP synthase subunit c (89 aa).

2 helical membrane-spanning segments follow: residues 3-23 and 53-73; these read IILG…AIGA and FILA…ALMF.

This sequence belongs to the ATPase C chain family. As to quaternary structure, F-type ATPases have 2 components, F(1) - the catalytic core - and F(0) - the membrane proton channel. F(1) has five subunits: alpha(3), beta(3), gamma(1), delta(1), epsilon(1). F(0) has three main subunits: a(1), b(2) and c(10-14). The alpha and beta chains form an alternating ring which encloses part of the gamma chain. F(1) is attached to F(0) by a central stalk formed by the gamma and epsilon chains, while a peripheral stalk is formed by the delta and b chains.

Its subcellular location is the cell inner membrane. In terms of biological role, f(1)F(0) ATP synthase produces ATP from ADP in the presence of a proton or sodium gradient. F-type ATPases consist of two structural domains, F(1) containing the extramembraneous catalytic core and F(0) containing the membrane proton channel, linked together by a central stalk and a peripheral stalk. During catalysis, ATP synthesis in the catalytic domain of F(1) is coupled via a rotary mechanism of the central stalk subunits to proton translocation. Key component of the F(0) channel; it plays a direct role in translocation across the membrane. A homomeric c-ring of between 10-14 subunits forms the central stalk rotor element with the F(1) delta and epsilon subunits. This chain is ATP synthase subunit c, found in Verminephrobacter eiseniae (strain EF01-2).